The sequence spans 223 residues: Small ribosomal subunit protein uS5 (223 aa).

The segment covering 1-15 (MTEAVAAEATETAPA) has biased composition (low complexity). The tract at residues 1–51 (MTEAVAAEATETAPATDDRRGGRRGERGDRGQGRGDRGGRGGRDGGREAEK) is disordered. A compositionally biased stretch (basic and acidic residues) spans 16–51 (TDDRRGGRRGERGDRGQGRGDRGGRGGRDGGREAEK). The 64-residue stretch at 54–117 (FVERVVTINR…EEAKKSFFRV (64 aa)) folds into the S5 DRBM domain.

The protein belongs to the universal ribosomal protein uS5 family. Part of the 30S ribosomal subunit. Contacts proteins S4 and S8.

With S4 and S12 plays an important role in translational accuracy. Its function is as follows. Located at the back of the 30S subunit body where it stabilizes the conformation of the head with respect to the body. In Paenarthrobacter aurescens (strain TC1), this protein is Small ribosomal subunit protein uS5.